The sequence spans 115 residues: MSNIIKQIEQEQMKQNVPSFRPGDSVEVKVWVVEGSKKRLQAFEGVVIAIRNRGLHSAFTVRKISNGEGVERVFQTHSPVIDSITVKRRGAVRQAKLYYLRERTGKAARIKERLN.

The protein belongs to the bacterial ribosomal protein bL19 family.

In terms of biological role, this protein is located at the 30S-50S ribosomal subunit interface and may play a role in the structure and function of the aminoacyl-tRNA binding site. This is Large ribosomal subunit protein bL19 from Sodalis glossinidius (strain morsitans).